Here is a 267-residue protein sequence, read N- to C-terminus: Tryptophan synthase alpha chain (267 aa).

Residues glutamate 44 and aspartate 55 each act as proton acceptor in the active site.

Belongs to the TrpA family. In terms of assembly, tetramer of two alpha and two beta chains.

The enzyme catalyses (1S,2R)-1-C-(indol-3-yl)glycerol 3-phosphate + L-serine = D-glyceraldehyde 3-phosphate + L-tryptophan + H2O. It participates in amino-acid biosynthesis; L-tryptophan biosynthesis; L-tryptophan from chorismate: step 5/5. Functionally, the alpha subunit is responsible for the aldol cleavage of indoleglycerol phosphate to indole and glyceraldehyde 3-phosphate. This Coxiella burnetii (strain Dugway 5J108-111) protein is Tryptophan synthase alpha chain.